The primary structure comprises 345 residues: MAGIVGYGAYIPKYRIKVEEIARVWNKDPESIKKGLLVYEKAVPSLDEDTATIAVEAARNALKRAEIDPKDIGAVYVGSESHPYAVKPTATIVAEAIDATPDLTAADLEFACKAGTAGIQMCMGLVESGLIKYGLAIGADTAQGAPGDALEYTAAAGGAAYIIGKSNVIAEFNGTYSYTTDTPDFWRREGKPYPRHGGRFTGEPAYFRHVINAAKGLMEKMGTKPEDYDYCVFHQPNGKFYIRVAKILGFKEEQYKIGLLTPYIGNTYSGAVPLGLSNVLDNCEGGERILAVSYGSGAGSDAFDITVTDRINKVKDKAPKTAYYLERKEYIDYAIYAKFRKKIKM.

Aspartate 28 lines the (3S)-3-hydroxy-3-methylglutaryl-CoA pocket. Glutamate 80 serves as the catalytic Proton donor/acceptor. 2 residues coordinate (3S)-3-hydroxy-3-methylglutaryl-CoA: cysteine 112 and threonine 153. The Acyl-thioester intermediate role is filled by cysteine 112. A CoA-binding site is contributed by arginine 199. (3S)-3-hydroxy-3-methylglutaryl-CoA is bound by residues threonine 201 and histidine 234. Histidine 234 functions as the Proton donor/acceptor in the catalytic mechanism. Lysine 239 contacts CoA. (3S)-3-hydroxy-3-methylglutaryl-CoA contacts are provided by arginine 243, asparagine 266, and serine 296.

The protein belongs to the thiolase-like superfamily. Archaeal HMG-CoA synthase family. As to quaternary structure, interacts with acetoacetyl-CoA thiolase that catalyzes the precedent step in the pathway and with a DUF35 protein. The acetoacetyl-CoA thiolase/HMG-CoA synthase complex channels the intermediate via a fused CoA-binding site, which allows for efficient coupling of the endergonic thiolase reaction with the exergonic HMGCS reaction.

The enzyme catalyses acetoacetyl-CoA + acetyl-CoA + H2O = (3S)-3-hydroxy-3-methylglutaryl-CoA + CoA + H(+). The protein operates within metabolic intermediate biosynthesis; (R)-mevalonate biosynthesis; (R)-mevalonate from acetyl-CoA: step 2/3. In terms of biological role, catalyzes the condensation of acetyl-CoA with acetoacetyl-CoA to form 3-hydroxy-3-methylglutaryl-CoA (HMG-CoA). Functions in the mevalonate (MVA) pathway leading to isopentenyl diphosphate (IPP), a key precursor for the biosynthesis of isoprenoid compounds that are building blocks of archaeal membrane lipids. The chain is Hydroxymethylglutaryl-CoA synthase from Methanocaldococcus jannaschii (strain ATCC 43067 / DSM 2661 / JAL-1 / JCM 10045 / NBRC 100440) (Methanococcus jannaschii).